The following is a 256-amino-acid chain: Trans-aconitate 2-methyltransferase (256 aa).

Belongs to the methyltransferase superfamily. Tam family.

It localises to the cytoplasm. The enzyme catalyses trans-aconitate + S-adenosyl-L-methionine = (E)-3-(methoxycarbonyl)pent-2-enedioate + S-adenosyl-L-homocysteine. Its function is as follows. Catalyzes the S-adenosylmethionine monomethyl esterification of trans-aconitate. The chain is Trans-aconitate 2-methyltransferase from Rhodopseudomonas palustris (strain HaA2).